We begin with the raw amino-acid sequence, 145 residues long: NADH-ubiquinone oxidoreductase subunit 8 (145 aa).

4Fe-4S ferredoxin-type domains lie at 43–73 (LRFY…VRVG) and 83–112 (DWFT…HSLF). Residues Cys53, Cys56, Cys59, Cys63, Cys92, Cys95, Cys98, and Cys102 each contribute to the [4Fe-4S] cluster site.

It belongs to the complex I 23 kDa subunit family. Requires [4Fe-4S] cluster as cofactor.

The protein localises to the mitochondrion. The enzyme catalyses a ubiquinone + NADH + 5 H(+)(in) = a ubiquinol + NAD(+) + 4 H(+)(out). Functionally, core subunit of the mitochondrial membrane respiratory chain NADH dehydrogenase (Complex I) that is believed to belong to the minimal assembly required for catalysis. Complex I functions in the transfer of electrons from NADH to the respiratory chain. The immediate electron acceptor for the enzyme is believed to be ubiquinone. May donate electrons to ubiquinone. The chain is NADH-ubiquinone oxidoreductase subunit 8 (M-ISP1) from Trypanosoma brucei brucei.